The sequence spans 305 residues: MESRKREDHLRKGSEVSPYESLLAGSISGAVARAVTAPLDTIKIRLQLQRSAFRSRVSVTTVVKDLLKNEGAIALWKGNVPAEILYVLYGAAQFTTYSSISRWLSHLSDTSGFNLPSSAHSLVSGTGAGVVSTLVTYPFDLLRTRLAANSEKKLLSMSGTAREIISSEGFTGLFAGIKPAMLSISTTTGLMFWSYELVRETLGDRDIPFKEGICGFIAGATSKGITFPLDTIRKRTQMYKILYNSAKRVGAFRLLADIVANEGVLGLYKGFGISVLKTSPTSAVSLFVYEYSLAAIQRINRKTLD.

A run of 6 helical transmembrane segments spans residues 16-32 (VSPYESLLAGSISGAVA), 84-100 (ILYVLYGAAQFTTYSSI), 122-142 (LVSGTGAGVVSTLVTYPFDLL), 169-193 (GFTGLFAGIKPAMLSISTTTGLMFW), 213-229 (ICGFIAGATSKGITFPL), and 270-287 (GFGISVLKTSPTSAVSLF). Solcar repeat units follow at residues 16-103 (VSPY…ISRW), 116-201 (PSSA…VRET), and 206-295 (DIPF…SLAA).

This sequence belongs to the mitochondrial carrier (TC 2.A.29) family.

It is found in the mitochondrion inner membrane. Its function is as follows. Mitochondrial transporter that mediates uptake of thiamine pyrophosphate (ThPP) into mitochondria. The polypeptide is Mitochondrial thiamine pyrophosphate carrier 1 (TPC1) (Scheffersomyces stipitis (strain ATCC 58785 / CBS 6054 / NBRC 10063 / NRRL Y-11545) (Yeast)).